Reading from the N-terminus, the 702-residue chain is Polyribonucleotide nucleotidyltransferase (702 aa).

Mg(2+)-binding residues include Asp486 and Asp492. The KH domain occupies 553-612; the sequence is PSMATIKIDPEKIRDVIGKGGATIRSITEQTGASIDLDDDGTVRIYAADKASSDAALLKI. Residues 622–690 form the S1 motif domain; that stretch reads DKLYKGKVVR…ARGRIKLSMK (69 aa).

It belongs to the polyribonucleotide nucleotidyltransferase family. As to quaternary structure, component of the RNA degradosome, which is a multiprotein complex involved in RNA processing and mRNA degradation. Requires Mg(2+) as cofactor.

The protein localises to the cytoplasm. The enzyme catalyses RNA(n+1) + phosphate = RNA(n) + a ribonucleoside 5'-diphosphate. Involved in mRNA degradation. Catalyzes the phosphorolysis of single-stranded polyribonucleotides processively in the 3'- to 5'-direction. This Marinomonas sp. (strain MWYL1) protein is Polyribonucleotide nucleotidyltransferase.